Consider the following 192-residue polypeptide: Phosphomevalonate kinase (192 aa).

ATP contacts are provided by residues 17-23 (KRKSGKD) and arginine 141. Substrate is bound at residue asparagine 170. Residues histidine 171, arginine 176, and glutamine 180 each contribute to the ATP site.

In terms of assembly, monomer. As to expression, heart, liver, skeletal muscle, kidney, and pancreas. Lower level in brain, placenta and lung.

Its subcellular location is the cytoplasm. The protein resides in the cytosol. The enzyme catalyses (R)-5-phosphomevalonate + ATP = (R)-5-diphosphomevalonate + ADP. It participates in isoprenoid biosynthesis; isopentenyl diphosphate biosynthesis via mevalonate pathway; isopentenyl diphosphate from (R)-mevalonate: step 2/3. In terms of biological role, catalyzes the reversible ATP-dependent phosphorylation of mevalonate 5-phosphate to produce mevalonate diphosphate and ADP, a key step in the mevalonic acid mediated biosynthesis of isopentenyl diphosphate and other polyisoprenoid metabolites. This is Phosphomevalonate kinase (PMVK) from Homo sapiens (Human).